Reading from the N-terminus, the 175-residue chain is Peptidyl-prolyl cis-trans isomerase B (175 aa).

A PPIase cyclophilin-type domain is found at 3–172 (EQLYATLKTN…EDVVIESVVV (170 aa)).

It belongs to the cyclophilin-type PPIase family.

It localises to the cytoplasm. The enzyme catalyses [protein]-peptidylproline (omega=180) = [protein]-peptidylproline (omega=0). With respect to regulation, inhibited by cyclosporin A (CsA). In terms of biological role, PPIases accelerate the folding of proteins. It catalyzes the cis-trans isomerization of proline imidic peptide bonds in oligopeptides. The polypeptide is Peptidyl-prolyl cis-trans isomerase B (cypB) (Streptomyces anulatus (Streptomyces chrysomallus)).